The primary structure comprises 514 residues: Peptide chain release factor 3 (514 aa).

The tr-type G domain maps to 8–268 (KKRRTFAIIS…SFLAFAPEPH (261 aa)). Residues 17–24 (SHPDAGKT), 85–89 (DTPGH), and 139–142 (NKLD) each bind GTP.

Belongs to the TRAFAC class translation factor GTPase superfamily. Classic translation factor GTPase family. PrfC subfamily.

It localises to the cytoplasm. In terms of biological role, increases the formation of ribosomal termination complexes and stimulates activities of RF-1 and RF-2. It binds guanine nucleotides and has strong preference for UGA stop codons. It may interact directly with the ribosome. The stimulation of RF-1 and RF-2 is significantly reduced by GTP and GDP, but not by GMP. The protein is Peptide chain release factor 3 of Streptococcus mutans serotype c (strain ATCC 700610 / UA159).